A 730-amino-acid polypeptide reads, in one-letter code: ABC transporter G family member 20 (730 aa).

Residues 15 to 244 (ISLKNVCRGY…YESQTLEEVF (230 aa)) form the ABC transporter domain. 47-54 (GASGSGKT) serves as a coordination point for ATP. Positions 281–303 (VNNNNNNNNNNNNNNYNNNDDEE) are disordered. A compositionally biased stretch (low complexity) spans 282-298 (NNNNNNNNNNNNNNYNN). One can recognise an ABC transmembrane type-2 domain in the interval 489–717 (SFETLAKQQA…FIAVLALNEK (229 aa)). 5 helical membrane-spanning segments follow: residues 520–540 (FIDF…AISI), 572–592 (FLGH…IAIY), 602–622 (IALV…LGLV), 634–654 (IQLS…LWPL), and 692–712 (VWVA…IAVL).

It belongs to the ABC transporter superfamily.

It localises to the membrane. This chain is ABC transporter G family member 20 (abcG20), found in Dictyostelium discoideum (Social amoeba).